Consider the following 206-residue polypeptide: MKILVASRNPKKLAELSRVLESSGVSGVELVSLTDVPEYEEVPETGASFEDNALIKAREGVKHTGLACVADDSGLAVDALNWMPGVLSARWSGRHGDDAANTALLLAQLSDIPDERRGAAFVSACALVTPEGEEVVVEGRWKGSIARIPAGQNGFGYDPIFVPRGGLRTAAELTPEEKDAVSHRGRALAALLPMLRNLVNLGRTAP.

7–12 is a binding site for substrate; sequence SRNPKK. The Proton acceptor role is filled by Asp-72. Asp-72 serves as a coordination point for Mg(2+). Substrate contacts are provided by residues Ser-73, 155–158, Lys-178, and 183–184; these read FGYD and HR.

Belongs to the HAM1 NTPase family. In terms of assembly, homodimer. Mg(2+) serves as cofactor.

The enzyme catalyses XTP + H2O = XMP + diphosphate + H(+). The catalysed reaction is dITP + H2O = dIMP + diphosphate + H(+). It carries out the reaction ITP + H2O = IMP + diphosphate + H(+). Functionally, pyrophosphatase that catalyzes the hydrolysis of nucleoside triphosphates to their monophosphate derivatives, with a high preference for the non-canonical purine nucleotides XTP (xanthosine triphosphate), dITP (deoxyinosine triphosphate) and ITP. Seems to function as a house-cleaning enzyme that removes non-canonical purine nucleotides from the nucleotide pool, thus preventing their incorporation into DNA/RNA and avoiding chromosomal lesions. The sequence is that of dITP/XTP pyrophosphatase from Mycobacteroides abscessus (strain ATCC 19977 / DSM 44196 / CCUG 20993 / CIP 104536 / JCM 13569 / NCTC 13031 / TMC 1543 / L948) (Mycobacterium abscessus).